The primary structure comprises 261 residues: Troponin T, slow skeletal muscle (261 aa).

Positions Met-1–Pro-30 are enriched in acidic residues. Disordered regions lie at residues Met-1 to Asp-61 and Glu-108 to Val-152. At Ser-2 the chain carries Phosphoserine; by CK2. The span at Val-31–Lys-40 shows a compositional bias: basic and acidic residues. Pro residues predominate over residues Ser-42–Ile-54. The segment covering Glu-108–Lys-148 has biased composition (basic and acidic residues).

It belongs to the troponin T family. Interacts with TPM3. In terms of tissue distribution, expressed in soleus muscle. Isoform 4 is predominantly expressed in fast muscles.

Its function is as follows. Troponin T is the tropomyosin-binding subunit of troponin, the thin filament regulatory complex which confers calcium-sensitivity to striated muscle actomyosin ATPase activity. This Rattus norvegicus (Rat) protein is Troponin T, slow skeletal muscle (Tnnt1).